Here is a 527-residue protein sequence, read N- to C-terminus: Bifunctional pantoate ligase/cytidylate kinase (527 aa).

Residues M1–L277 are pantoate--beta-alanine ligase. Residue M27–H34 coordinates ATP. The Proton donor role is filled by H34. Q58 contacts (R)-pantoate. Q58 contacts beta-alanine. G147–D150 is a binding site for ATP. Q153 contacts (R)-pantoate. ATP is bound by residues V176 and L184–R187. The segment at T278–G527 is cytidylate kinase. Residues G507–G527 are disordered. The segment covering S511–G527 has biased composition (polar residues).

This sequence in the N-terminal section; belongs to the pantothenate synthetase family. In the C-terminal section; belongs to the cytidylate kinase family. Type 1 subfamily.

It localises to the cytoplasm. It catalyses the reaction (R)-pantoate + beta-alanine + ATP = (R)-pantothenate + AMP + diphosphate + H(+). It carries out the reaction CMP + ATP = CDP + ADP. The catalysed reaction is dCMP + ATP = dCDP + ADP. The protein operates within cofactor biosynthesis; (R)-pantothenate biosynthesis; (R)-pantothenate from (R)-pantoate and beta-alanine: step 1/1. Functionally, catalyzes the condensation of pantoate with beta-alanine in an ATP-dependent reaction via a pantoyl-adenylate intermediate. In terms of biological role, catalyzes the transfer of a phosphate group from ATP to either CMP or dCMP to form CDP or dCDP and ADP, respectively. The protein is Bifunctional pantoate ligase/cytidylate kinase of Synechococcus elongatus (strain ATCC 33912 / PCC 7942 / FACHB-805) (Anacystis nidulans R2).